The chain runs to 683 residues: Translation factor guf1, mitochondrial (683 aa).

The transit peptide at 1 to 43 (MRGCLQLARWLSAAPKGTAASLTRAPFVLANAPRYFTSSASRA) directs the protein to the mitochondrion. Positions 66-250 (ERYRNFCIVA…KIPAYGHFPV (185 aa)) constitute a tr-type G domain. GTP is bound by residues 75 to 82 (AHVDHGKS), 139 to 143 (DTPGH), and 193 to 196 (NKVD).

The protein belongs to the TRAFAC class translation factor GTPase superfamily. Classic translation factor GTPase family. LepA subfamily.

Its subcellular location is the mitochondrion inner membrane. The catalysed reaction is GTP + H2O = GDP + phosphate + H(+). In terms of biological role, promotes mitochondrial protein synthesis. May act as a fidelity factor of the translation reaction, by catalyzing a one-codon backward translocation of tRNAs on improperly translocated ribosomes. Binds to mitochondrial ribosomes in a GTP-dependent manner. This chain is Translation factor guf1, mitochondrial (guf1), found in Aspergillus fumigatus (strain ATCC MYA-4609 / CBS 101355 / FGSC A1100 / Af293) (Neosartorya fumigata).